Here is a 343-residue protein sequence, read N- to C-terminus: Anthranilate 1,2-dioxygenase electron transfer component (343 aa).

The 2Fe-2S ferredoxin-type domain maps to 3 to 96 (HSVALNFADG…NAAFYFDHHS (94 aa)). 4 residues coordinate [2Fe-2S] cluster: cysteine 40, cysteine 45, cysteine 48, and cysteine 80. Residues 98–338 (ICNAGETLKI…HIYSEKFLQS (241 aa)) form a ferredoxin-reductase region. The FAD-binding FR-type domain maps to 103-206 (ETLKIATVVT…EAPLGSFYLR (104 aa)).

This sequence belongs to the bacterial ring-hydroxylating dioxygenase ferredoxin reductase family. In terms of assembly, monomer. It is part of the anthranilate dioxygenase two component enzyme system. The other component is an oxygenase component consisting of 3 large (AntA) and 3 small (AntB) subunits. FAD is required as a cofactor. It depends on [2Fe-2S] cluster as a cofactor.

It carries out the reaction 2 reduced [2Fe-2S]-[ferredoxin] + NAD(+) + H(+) = 2 oxidized [2Fe-2S]-[ferredoxin] + NADH. It participates in aromatic compound metabolism; anthranilate degradation via hydroxylation; catechol from anthranilate: step 1/1. Functionally, electron transfer component of anthranilate 1,2-dioxygenase system. This Acinetobacter baylyi (strain ATCC 33305 / BD413 / ADP1) protein is Anthranilate 1,2-dioxygenase electron transfer component.